The primary structure comprises 92 residues: Large ribosomal subunit protein bL28 (92 aa).

Belongs to the bacterial ribosomal protein bL28 family.

The chain is Large ribosomal subunit protein bL28 from Borrelia hermsii (strain HS1 / DAH).